Consider the following 172-residue polypeptide: Small ribosomal subunit protein uS5 (172 aa).

The S5 DRBM domain maps to 17 to 80 (LREKMISVNR…DEARRKMVKV (64 aa)).

This sequence belongs to the universal ribosomal protein uS5 family. In terms of assembly, part of the 30S ribosomal subunit. Contacts proteins S4 and S8.

Functionally, with S4 and S12 plays an important role in translational accuracy. In terms of biological role, located at the back of the 30S subunit body where it stabilizes the conformation of the head with respect to the body. The sequence is that of Small ribosomal subunit protein uS5 from Cupriavidus pinatubonensis (strain JMP 134 / LMG 1197) (Cupriavidus necator (strain JMP 134)).